The chain runs to 393 residues: NAD(P)H-quinone oxidoreductase subunit H, chloroplastic (393 aa).

This sequence belongs to the complex I 49 kDa subunit family. In terms of assembly, NDH is composed of at least 16 different subunits, 5 of which are encoded in the nucleus.

The protein localises to the plastid. The protein resides in the chloroplast thylakoid membrane. It catalyses the reaction a plastoquinone + NADH + (n+1) H(+)(in) = a plastoquinol + NAD(+) + n H(+)(out). The enzyme catalyses a plastoquinone + NADPH + (n+1) H(+)(in) = a plastoquinol + NADP(+) + n H(+)(out). NDH shuttles electrons from NAD(P)H:plastoquinone, via FMN and iron-sulfur (Fe-S) centers, to quinones in the photosynthetic chain and possibly in a chloroplast respiratory chain. The immediate electron acceptor for the enzyme in this species is believed to be plastoquinone. Couples the redox reaction to proton translocation, and thus conserves the redox energy in a proton gradient. In Lobularia maritima (Sweet alyssum), this protein is NAD(P)H-quinone oxidoreductase subunit H, chloroplastic.